The chain runs to 406 residues: Pyruvate dehydrogenase E1 component subunit beta-3, chloroplastic (406 aa).

The N-terminal 70 residues, 1–70 (MSAILQGAGA…PLIPNAVTTK (70 aa)), are a transit peptide targeting the chloroplast. Residue Glu142 coordinates thiamine diphosphate. Residues Val195, Ala243, Ile244, and Asn248 each coordinate K(+).

In terms of assembly, tetramer of 2 alpha and 2 beta subunits. Thiamine diphosphate is required as a cofactor.

The protein resides in the plastid. The protein localises to the chloroplast. The catalysed reaction is N(6)-[(R)-lipoyl]-L-lysyl-[protein] + pyruvate + H(+) = N(6)-[(R)-S(8)-acetyldihydrolipoyl]-L-lysyl-[protein] + CO2. In terms of biological role, the pyruvate dehydrogenase complex catalyzes the overall conversion of pyruvate to acetyl-CoA and CO(2). It contains multiple copies of three enzymatic components: pyruvate dehydrogenase (E1), dihydrolipoamide acetyltransferase (E2) and lipoamide dehydrogenase (E3). This Arabidopsis thaliana (Mouse-ear cress) protein is Pyruvate dehydrogenase E1 component subunit beta-3, chloroplastic (E1-BETA-2).